A 321-amino-acid chain; its full sequence is MSFVTEIKTFAALGSGVIGSGWIARALAHGLDVVAWDPAPGAEAALRARVANAWPALRKQGLAPGAAQERLRFVASIEECVGDADFIQESAPERLDLKLDLHARISAAARPDVLIGSSTSGLLPSEFYAEASHPERCLVGHPFNPVYLLPLVEVVGGERTAAEAVRAAMRVYESLGMRPLHVRKEVPGFIADRLLEALWREALHLVNDGVATTGEIDDAIRFGAGLRWSFMGTFLTYTLAGGNAGMRHFMAQFGPALQLPWTYLPAPELTEALIDRVVEGTAEQQGARSIAELERYRDDCLLAVLGAIRETKARHGFAFAE.

14–19 is a binding site for NAD(+); it reads GSGVIG.

It belongs to the 3-hydroxyacyl-CoA dehydrogenase family. L-carnitine dehydrogenase subfamily. As to quaternary structure, homodimer.

The protein resides in the cytoplasm. It catalyses the reaction carnitine + NAD(+) = 3-dehydrocarnitine + NADH + H(+). It functions in the pathway amine and polyamine metabolism; carnitine metabolism. With respect to regulation, analogs of L-carnitine such as D-carnitine, glycine betaine and choline, are competitive inhibitors of L-carnitine oxidation. Its function is as follows. Catalyzes the NAD(+)-dependent oxidation of L-carnitine to 3-dehydrocarnitine. Is specific for L-carnitine and NAD(+) as substrates. D,L-3-hydroxybutyrate, L-lactate, ethanol, L-malate and D,L-isocitrate are not substrates. Is involved in a L-carnitine degradation pathway that allows P.aeruginosa to grow on L-carnitine as the sole source of carbon and nitrogen. The sequence is that of L-carnitine dehydrogenase from Pseudomonas aeruginosa (strain ATCC 15692 / DSM 22644 / CIP 104116 / JCM 14847 / LMG 12228 / 1C / PRS 101 / PAO1).